The primary structure comprises 207 residues: Thiamine-phosphate synthase (207 aa).

4-amino-2-methyl-5-(diphosphooxymethyl)pyrimidine is bound by residues 41–45 (QLRLK) and Asn73. Mg(2+) is bound by residues Asp74 and Asp93. Residue Thr111 participates in 4-amino-2-methyl-5-(diphosphooxymethyl)pyrimidine binding. 138–140 (TKT) is a binding site for 2-[(2R,5Z)-2-carboxy-4-methylthiazol-5(2H)-ylidene]ethyl phosphate. Position 141 (Lys141) interacts with 4-amino-2-methyl-5-(diphosphooxymethyl)pyrimidine. Gly168 is a 2-[(2R,5Z)-2-carboxy-4-methylthiazol-5(2H)-ylidene]ethyl phosphate binding site.

The protein belongs to the thiamine-phosphate synthase family. It depends on Mg(2+) as a cofactor.

It carries out the reaction 2-[(2R,5Z)-2-carboxy-4-methylthiazol-5(2H)-ylidene]ethyl phosphate + 4-amino-2-methyl-5-(diphosphooxymethyl)pyrimidine + 2 H(+) = thiamine phosphate + CO2 + diphosphate. The catalysed reaction is 2-(2-carboxy-4-methylthiazol-5-yl)ethyl phosphate + 4-amino-2-methyl-5-(diphosphooxymethyl)pyrimidine + 2 H(+) = thiamine phosphate + CO2 + diphosphate. It catalyses the reaction 4-methyl-5-(2-phosphooxyethyl)-thiazole + 4-amino-2-methyl-5-(diphosphooxymethyl)pyrimidine + H(+) = thiamine phosphate + diphosphate. Its pathway is cofactor biosynthesis; thiamine diphosphate biosynthesis; thiamine phosphate from 4-amino-2-methyl-5-diphosphomethylpyrimidine and 4-methyl-5-(2-phosphoethyl)-thiazole: step 1/1. Its function is as follows. Condenses 4-methyl-5-(beta-hydroxyethyl)thiazole monophosphate (THZ-P) and 2-methyl-4-amino-5-hydroxymethyl pyrimidine pyrophosphate (HMP-PP) to form thiamine monophosphate (TMP). This is Thiamine-phosphate synthase from Pelagibacter ubique (strain HTCC1062).